We begin with the raw amino-acid sequence, 198 residues long: Elongation factor Ts (198 aa).

The involved in Mg(2+) ion dislocation from EF-Tu stretch occupies residues 81-84 (TDFV).

The protein belongs to the EF-Ts family.

It localises to the cytoplasm. Functionally, associates with the EF-Tu.GDP complex and induces the exchange of GDP to GTP. It remains bound to the aminoacyl-tRNA.EF-Tu.GTP complex up to the GTP hydrolysis stage on the ribosome. The polypeptide is Elongation factor Ts (Pseudothermotoga lettingae (strain ATCC BAA-301 / DSM 14385 / NBRC 107922 / TMO) (Thermotoga lettingae)).